The following is a 60-amino-acid chain: Mastoparan-VB2 (60 aa).

Positions 1–27 are cleaved as a signal peptide; the sequence is MKNTILLLFTAFIFLMGFFGMSADALA. AXPX repeat units follow at residues 27–30, 31–34, 35–38, and 41–44; these read ADPK, ADPL, AGPF, and ADPD. The propeptide occupies 28–45; it reads DPKADPLAGPFPDADPDP. Leu59 carries the leucine amide modification.

This sequence belongs to the MCD family. Mastoparan subfamily. As to expression, expressed by the venom gland.

Its subcellular location is the secreted. The protein localises to the target cell membrane. Its function is as follows. Antimicrobial peptide. Shows activity against both Gram-positive and -negative bacteria, as well against fungi. Also promotes moderate mast cell degranulation. Does not show hemolytic activity on rabbit and human erythrocytes. Its mast cell degranulation activity may be related to the activation of G-protein coupled receptors in mast cells as well as interaction with other proteins located in cell endosomal membranes in the mast cells. This Vespa bicolor (Black shield wasp) protein is Mastoparan-VB2.